The chain runs to 132 residues: Anti-sigma-E factor RseA (132 aa).

The residue at position 36 (threonine 36) is a Phosphothreonine; by PknB. Positions 63, 67, and 70 each coordinate Zn(2+). The disordered stretch occupies residues 106–132 (RTPEVTPDVSEQAKFADDPTRGRRKRR).

Belongs to the zinc-associated anti-sigma factor (ZAS) superfamily. In terms of assembly, interacts with ECF RNA polymerase sigma factor SigE, interaction is abrogated by treatment of cells with H(2)O(2), detergent or vancomycin (the latter 2 cause surface stress). This probably inhibits the interaction of SigE with the RNA polymerase catalytic core. Zn(2+) is required as a cofactor. In terms of processing, phosphorylated by PknB on Thr-36; can be dephosphorylated (at least in vitro) by PstP. Phosphorylation is the signal for subsequent degradation by the ClpC1-ClpP2 complex. Post-translationally, degraded following vancomycin treatment (surface stress) by a ClpC1-ClpP2 complex.

It localises to the cytoplasm. In terms of biological role, an anti-sigma factor for extracytoplasmic function (ECF) sigma factor SigE. ECF sigma factors are held in an inactive form by an anti-sigma factor. In Mycolicibacterium smegmatis (strain ATCC 700084 / mc(2)155) (Mycobacterium smegmatis), this protein is Anti-sigma-E factor RseA (rseA).